Here is a 324-residue protein sequence, read N- to C-terminus: Beta-ketoacyl-[acyl-carrier-protein] synthase III (324 aa).

Catalysis depends on residues C114 and H246. The interval 247–251 (QANLR) is ACP-binding. N276 is a catalytic residue.

It belongs to the thiolase-like superfamily. FabH family. Homodimer.

The protein resides in the cytoplasm. It carries out the reaction malonyl-[ACP] + acetyl-CoA + H(+) = 3-oxobutanoyl-[ACP] + CO2 + CoA. Its pathway is lipid metabolism; fatty acid biosynthesis. Functionally, catalyzes the condensation reaction of fatty acid synthesis by the addition to an acyl acceptor of two carbons from malonyl-ACP. Catalyzes the first condensation reaction which initiates fatty acid synthesis and may therefore play a role in governing the total rate of fatty acid production. Possesses both acetoacetyl-ACP synthase and acetyl transacylase activities. Its substrate specificity determines the biosynthesis of branched-chain and/or straight-chain of fatty acids. The chain is Beta-ketoacyl-[acyl-carrier-protein] synthase III from Campylobacter jejuni (strain RM1221).